Here is a 414-residue protein sequence, read N- to C-terminus: Ciliary microtubule-associated protein 2 (414 aa).

The polypeptide is Ciliary microtubule-associated protein 2 (Cimap2) (Mus musculus (Mouse)).